The chain runs to 637 residues: Chaperone protein HtpG (637 aa).

The interval 1–345 (MSQQETHGFQ…SNDLPLNVSR (345 aa)) is a; substrate-binding. Positions 346–562 (EILQDNHITK…EGEMSTQMIK (217 aa)) are b. A c region spans residues 563–637 (LMQAAGQPVP…MNQMLLANMK (75 aa)).

The protein belongs to the heat shock protein 90 family. As to quaternary structure, homodimer.

Its subcellular location is the cytoplasm. Functionally, molecular chaperone. Has ATPase activity. The protein is Chaperone protein HtpG of Shewanella putrefaciens (strain CN-32 / ATCC BAA-453).